The sequence spans 177 residues: MAELSTIARPYAKAAFDFAIEKNAVESWAEMLSFAAQVSENETMKPLLSGALSSSQLADLFIKVCGEQINEQGQNLIKVMAENGRLEVLPAVYELFHEFSNEWAKEVEASVVSATELSAEQQQQISASLEKRLTRKVKLNCSVDASLVAGVIITAGDLVIDGSVSGKLNRLSEKLQS.

The protein belongs to the ATPase delta chain family. F-type ATPases have 2 components, F(1) - the catalytic core - and F(0) - the membrane proton channel. F(1) has five subunits: alpha(3), beta(3), gamma(1), delta(1), epsilon(1). F(0) has three main subunits: a(1), b(2) and c(10-14). The alpha and beta chains form an alternating ring which encloses part of the gamma chain. F(1) is attached to F(0) by a central stalk formed by the gamma and epsilon chains, while a peripheral stalk is formed by the delta and b chains.

Its subcellular location is the cell inner membrane. Functionally, f(1)F(0) ATP synthase produces ATP from ADP in the presence of a proton or sodium gradient. F-type ATPases consist of two structural domains, F(1) containing the extramembraneous catalytic core and F(0) containing the membrane proton channel, linked together by a central stalk and a peripheral stalk. During catalysis, ATP synthesis in the catalytic domain of F(1) is coupled via a rotary mechanism of the central stalk subunits to proton translocation. This protein is part of the stalk that links CF(0) to CF(1). It either transmits conformational changes from CF(0) to CF(1) or is implicated in proton conduction. The protein is ATP synthase subunit delta of Shewanella loihica (strain ATCC BAA-1088 / PV-4).